The chain runs to 279 residues: Urease accessory protein UreD (279 aa).

The protein belongs to the UreD family. As to quaternary structure, ureD, UreF and UreG form a complex that acts as a GTP-hydrolysis-dependent molecular chaperone, activating the urease apoprotein by helping to assemble the nickel containing metallocenter of UreC. The UreE protein probably delivers the nickel.

The protein localises to the cytoplasm. In terms of biological role, required for maturation of urease via the functional incorporation of the urease nickel metallocenter. In Nostoc sp. (strain PCC 7120 / SAG 25.82 / UTEX 2576), this protein is Urease accessory protein UreD.